The chain runs to 435 residues: 3-phosphoshikimate 1-carboxyvinyltransferase (435 aa).

Residues Lys-21, Ser-22, and Arg-26 each contribute to the 3-phosphoshikimate site. Phosphoenolpyruvate is bound at residue Lys-21. Phosphoenolpyruvate-binding residues include Gly-99 and Arg-127. The 3-phosphoshikimate site is built by Ser-173, Gln-175, Asp-323, and Lys-350. Residue Gln-175 participates in phosphoenolpyruvate binding. Asp-323 (proton acceptor) is an active-site residue. Residues Arg-354 and Arg-396 each contribute to the phosphoenolpyruvate site.

Belongs to the EPSP synthase family. As to quaternary structure, monomer.

It is found in the cytoplasm. The catalysed reaction is 3-phosphoshikimate + phosphoenolpyruvate = 5-O-(1-carboxyvinyl)-3-phosphoshikimate + phosphate. Its pathway is metabolic intermediate biosynthesis; chorismate biosynthesis; chorismate from D-erythrose 4-phosphate and phosphoenolpyruvate: step 6/7. Its function is as follows. Catalyzes the transfer of the enolpyruvyl moiety of phosphoenolpyruvate (PEP) to the 5-hydroxyl of shikimate-3-phosphate (S3P) to produce enolpyruvyl shikimate-3-phosphate and inorganic phosphate. This is 3-phosphoshikimate 1-carboxyvinyltransferase from Akkermansia muciniphila (strain ATCC BAA-835 / DSM 22959 / JCM 33894 / BCRC 81048 / CCUG 64013 / CIP 107961 / Muc).